Consider the following 59-residue polypeptide: Large ribosomal subunit protein bL32 (59 aa).

The tract at residues 1-59 (MAVQQNKKSPSKRGMHRSHDFLTNPPLAVEPTSGEIHLRHHVSPNGYYRGRKVLPAKGE) is disordered. The segment covering 49–59 (RGRKVLPAKGE) has biased composition (basic residues).

This sequence belongs to the bacterial ribosomal protein bL32 family.

The polypeptide is Large ribosomal subunit protein bL32 (Methylobacillus flagellatus (strain ATCC 51484 / DSM 6875 / VKM B-1610 / KT)).